The sequence spans 344 residues: MQPMTRARIAVDAMGGDYAPDEIVAGALRASEELDADILLVGNPVPIQRYLDEHAPTAKPQIVAANDVVDMGEEPLSALKRKPKASINVAMDLVKAGAADAVVSAGHSGAAMAAALLRLGRLPGIDRPAIGAVLPTLLPGKSVLVLDVGANVDCRPKYLEQFAVMGSIYSQYVLDVENPKVGLLNIGEEDCKGNDLALKAHQLLRQNRQISFLGNAEGRDVLSGQFDVVVCDGFVGNVLLKFAESLGSVLVQILREELPRGWRGQLGTALLRPNLRKIKQRIDHAEHGGGLLLGVDGICIISHGSSQAPSIFNAIRLAKEAVDHRVSERIQACYQDAVAVEDQA.

This sequence belongs to the PlsX family. Homodimer. Probably interacts with PlsY.

Its subcellular location is the cytoplasm. The catalysed reaction is a fatty acyl-[ACP] + phosphate = an acyl phosphate + holo-[ACP]. Its pathway is lipid metabolism; phospholipid metabolism. In terms of biological role, catalyzes the reversible formation of acyl-phosphate (acyl-PO(4)) from acyl-[acyl-carrier-protein] (acyl-ACP). This enzyme utilizes acyl-ACP as fatty acyl donor, but not acyl-CoA. This chain is Phosphate acyltransferase, found in Thermosynechococcus vestitus (strain NIES-2133 / IAM M-273 / BP-1).